Here is a 3263-residue protein sequence, read N- to C-terminus: Protein unc-80 (3263 aa).

Disordered regions lie at residues 491–527 (KSAL…LDEG), 627–666 (NDTE…SNPS), 939–1010 (PTTS…DDGV), 1042–1076 (DEEI…QVKA), 1380–1475 (SRQS…RMRA), 1633–1660 (LRKQ…RESA), and 1680–1721 (MQQE…LPEK). The span at 499–508 (NENRRTDHQR) shows a compositional bias: basic and acidic residues. Over residues 509–519 (MPSTQKSVSGS) the composition is skewed to polar residues. Low complexity predominate over residues 644–658 (TTNSRRSSLNTLSRR). Composition is skewed to polar residues over residues 956–967 (GAQSQKQSNDQA) and 981–1005 (SGGT…TVSS). The span at 1042 to 1055 (DEEISDNENEEGTS) shows a compositional bias: acidic residues. Positions 1393–1402 (QGSTKSTTYV) are enriched in polar residues. Residues 1435-1447 (HKRKSFRNRKQSK) show a composition bias toward basic residues. Composition is skewed to polar residues over residues 1460 to 1469 (GSLTSQQSPI) and 1633 to 1653 (LRKQ…QSTA). Basic and acidic residues predominate over residues 1680–1710 (MQQEKEKEKEKEKEEKDALKKQSVEQDHSST). A run of 5 helical transmembrane segments spans residues 2088 to 2108 (AIGM…GLYF), 2318 to 2338 (AFMF…MIMH), 2352 to 2372 (YISI…FLIM), 2953 to 2973 (AIYL…APMW), and 2995 to 3015 (AFVD…LPMI). Disordered regions lie at residues 3078–3166 (YTPT…RTRS) and 3178–3198 (RKSR…SVEL). Residues 3124-3135 (IPEDPEDSEDVI) show a composition bias toward acidic residues. The segment covering 3138–3166 (NSTGQVTSRISKSPSIPLNKTHQSSRTRS) has biased composition (polar residues).

Belongs to the unc-80 family. Expressed in the nervous system. Expressed in both acetylcholine and GABA motor neurons.

The protein resides in the membrane. Probable component of the nca-1 sodium channel complex, a cation channel that regulates neuronal activity by transmitting depolarization signals to synapses. Regulates the transition from slow to rapid forms of locomotion. Required for localization of nca-1 along axons and in non-synaptic regions. Contributes to endocytosis defects in synaptojanin mutants. Involved in the control of anasthetic response to halothane. The protein is Protein unc-80 (unc-80) of Caenorhabditis elegans.